A 298-amino-acid chain; its full sequence is CD-NTase-associated protein 6 (298 aa).

ATP contacts are provided by residues 80-85 (GTGKTA) and 204-205 (RR).

This sequence belongs to the AAA ATPase family. Homohexamer, forms a 1:1:6 CdnC:Cap7:Cap6 complex.

Functionally, regulates complex assembly in a CBASS antivirus system. CBASS (cyclic oligonucleotide-based antiphage signaling system) provides immunity against bacteriophage. The CD-NTase protein synthesizes cyclic nucleotides in response to infection; these serve as specific second messenger signals. The signals activate a diverse range of effectors, leading to bacterial cell death and thus abortive phage infection. A type III CBASS system. Expression of this CBASS system (Cap18-Cap6-Cap7-CdnC-CapW-Cap17) in a susceptible E.coli (strain MG1655) confers resistance to bacteriophage P1. Binds and disassembles an active CdnC:Cap7 complex, inhibiting the complex's ability to synthesize cyclic nucleotide second messengers. An AAA+-ATPase remodeler, in the absence of foreign threat Cap6 probably maintains the Cap7 protein in its open, inactive state. Once activated (presumably by a bacteriophage protein) Cap7 binds to and activates its cognate CD-NTase (CdnC in this bacteria) to synthesize a cyclic nucleotide second messenger which leads to abortive phage infection. This chain is CD-NTase-associated protein 6, found in Escherichia coli (strain KTE188).